The sequence spans 309 residues: MIAKYIIKHGLELAYDIKADAFMIFTETGKSYELLKSFLKKDEHSGIIKILDKISHKNVKIIVATPNQVTYKKISSENEENIYPIFIKHREDNRCMIISSGIVHALKMKILKENNKIVAVVGEPKTPGKLDTIMVVNVKEHVKTITLYELFETLDEKQKRTLKEIIKLAMEIGREGREGEYVGTIFVMGDTLNVMSMSKPLILNPFAGHNASIFDENVKGTIKELSSIDGAFIITDEGKVVSAGRFLEIKGDVNIPKGLGARHLAAASISKNTNAIAVTVSQSGGIVRVFKDGKIVFETDPRANILFFD.

Positions 144–301 (TITLYELFET…DGKIVFETDP (158 aa)) constitute a DAC domain.

Belongs to the adenylate cyclase family. DacZ subfamily. Mn(2+) serves as cofactor.

The catalysed reaction is 2 ATP = 3',3'-c-di-AMP + 2 diphosphate. Diadenylate cyclase that catalyzes the condensation of 2 ATP molecules into cyclic di-AMP (c-di-AMP). c-di-AMP is a second messenger for intracellular signal transduction involved in the control of important regulatory processes such as osmoregulation. This is Diadenylate cyclase from Methanocaldococcus jannaschii (strain ATCC 43067 / DSM 2661 / JAL-1 / JCM 10045 / NBRC 100440) (Methanococcus jannaschii).